We begin with the raw amino-acid sequence, 151 residues long: Peptide methionine sulfoxide reductase MsrB (151 aa).

Positions 9-132 (DGELKRTLTK…NSAALKFIPF (124 aa)) constitute a MsrB domain. Residue cysteine 121 is the Nucleophile of the active site.

The protein belongs to the MsrB Met sulfoxide reductase family.

It carries out the reaction L-methionyl-[protein] + [thioredoxin]-disulfide + H2O = L-methionyl-(R)-S-oxide-[protein] + [thioredoxin]-dithiol. The sequence is that of Peptide methionine sulfoxide reductase MsrB from Mycoplasma pneumoniae (strain ATCC 29342 / M129 / Subtype 1) (Mycoplasmoides pneumoniae).